The sequence spans 262 residues: Ribose-5-phosphate isomerase A (262 aa).

Residues 33 to 36 (TGST), 89 to 92 (DGAD), and 102 to 105 (KGGG) contribute to the substrate site. Residue glutamate 111 is the Proton acceptor of the active site. A substrate-binding site is contributed by lysine 129.

This sequence belongs to the ribose 5-phosphate isomerase family. Homodimer.

The catalysed reaction is aldehydo-D-ribose 5-phosphate = D-ribulose 5-phosphate. It participates in carbohydrate degradation; pentose phosphate pathway; D-ribose 5-phosphate from D-ribulose 5-phosphate (non-oxidative stage): step 1/1. Functionally, catalyzes the reversible conversion of ribose-5-phosphate to ribulose 5-phosphate. This Cereibacter sphaeroides (strain ATCC 17029 / ATH 2.4.9) (Rhodobacter sphaeroides) protein is Ribose-5-phosphate isomerase A.